We begin with the raw amino-acid sequence, 269 residues long: MMESIKKLRELTGAGMMDVKKALADAGNDEEKAIALLRERGIVKAAKKADREAKEGLVRFVVDGNRAAMVEVNSETDFVARNSDFQALVEQVAQAALRAGTNNVEELRNFTLDNGETVGNAVAAAAGKIGENLVLNRVAYIDAGEGEHVAGYVHSNGKIGVLVDLLGGTEAQAKDVALHVAAERPQYLNRDEVNAADLEKEREILTNKALNEGKPQQIVDKIVQGQIGKFYEERVLPEQKFVKDNSVTVGQYLGNAQVKRFVRFEVGAQ.

The interval 76-79 (TDFV) is involved in Mg(2+) ion dislocation from EF-Tu.

Belongs to the EF-Ts family.

It is found in the cytoplasm. Functionally, associates with the EF-Tu.GDP complex and induces the exchange of GDP to GTP. It remains bound to the aminoacyl-tRNA.EF-Tu.GTP complex up to the GTP hydrolysis stage on the ribosome. This chain is Elongation factor Ts, found in Deinococcus geothermalis (strain DSM 11300 / CIP 105573 / AG-3a).